The chain runs to 1070 residues: DNA-directed RNA polymerase subunit beta (1070 aa).

It belongs to the RNA polymerase beta chain family. In terms of assembly, in plastids the minimal PEP RNA polymerase catalytic core is composed of four subunits: alpha, beta, beta', and beta''. When a (nuclear-encoded) sigma factor is associated with the core the holoenzyme is formed, which can initiate transcription.

It localises to the plastid. It is found in the chloroplast. The catalysed reaction is RNA(n) + a ribonucleoside 5'-triphosphate = RNA(n+1) + diphosphate. In terms of biological role, DNA-dependent RNA polymerase catalyzes the transcription of DNA into RNA using the four ribonucleoside triphosphates as substrates. The protein is DNA-directed RNA polymerase subunit beta of Platanus occidentalis (Sycamore).